The primary structure comprises 120 residues: Aspartate 1-decarboxylase (120 aa).

Serine 25 acts as the Schiff-base intermediate with substrate; via pyruvic acid in catalysis. Pyruvic acid (Ser) is present on serine 25. Position 57 (threonine 57) interacts with substrate. Catalysis depends on tyrosine 58, which acts as the Proton donor. Substrate is bound at residue 73-75 (GAA).

This sequence belongs to the PanD family. As to quaternary structure, heterooctamer of four alpha and four beta subunits. Requires pyruvate as cofactor. Is synthesized initially as an inactive proenzyme, which is activated by self-cleavage at a specific serine bond to produce a beta-subunit with a hydroxyl group at its C-terminus and an alpha-subunit with a pyruvoyl group at its N-terminus.

Its subcellular location is the cytoplasm. The enzyme catalyses L-aspartate + H(+) = beta-alanine + CO2. The protein operates within cofactor biosynthesis; (R)-pantothenate biosynthesis; beta-alanine from L-aspartate: step 1/1. Its function is as follows. Catalyzes the pyruvoyl-dependent decarboxylation of aspartate to produce beta-alanine. This chain is Aspartate 1-decarboxylase, found in Thermus thermophilus (strain ATCC 27634 / DSM 579 / HB8).